Reading from the N-terminus, the 62-residue chain is Large ribosomal subunit protein bL33c (62 aa).

This sequence belongs to the bacterial ribosomal protein bL33 family.

It localises to the plastid. The protein localises to the chloroplast. This Cyanidioschyzon merolae (strain NIES-3377 / 10D) (Unicellular red alga) protein is Large ribosomal subunit protein bL33c.